Consider the following 122-residue polypeptide: MELKVSLNPIHIKELEQNYINSNMPDVGVGDTVKIGVLITEGNKERVQFSEGVVISKNNNGLNTTVTVRRVLQGIGVERIYLVNSPKLKSFEILRRSKIRRSKLYYLRSRVGKATRLQQRFN.

Belongs to the bacterial ribosomal protein bL19 family.

The protein localises to the plastid. It localises to the chloroplast. In Rhodomonas salina (Cryptomonas salina), this protein is Large ribosomal subunit protein bL19c (rpl19).